The following is a 218-amino-acid chain: Phosphatidylserine decarboxylase proenzyme (218 aa).

Ser-187 (schiff-base intermediate with substrate; via pyruvic acid) is an active-site residue. Ser-187 is subject to Pyruvic acid (Ser); by autocatalysis.

Belongs to the phosphatidylserine decarboxylase family. PSD-A subfamily. As to quaternary structure, heterodimer of a large membrane-associated beta subunit and a small pyruvoyl-containing alpha subunit. Pyruvate is required as a cofactor. Is synthesized initially as an inactive proenzyme. Formation of the active enzyme involves a self-maturation process in which the active site pyruvoyl group is generated from an internal serine residue via an autocatalytic post-translational modification. Two non-identical subunits are generated from the proenzyme in this reaction, and the pyruvate is formed at the N-terminus of the alpha chain, which is derived from the carboxyl end of the proenzyme. The post-translation cleavage follows an unusual pathway, termed non-hydrolytic serinolysis, in which the side chain hydroxyl group of the serine supplies its oxygen atom to form the C-terminus of the beta chain, while the remainder of the serine residue undergoes an oxidative deamination to produce ammonia and the pyruvoyl prosthetic group on the alpha chain.

Its subcellular location is the cell membrane. The catalysed reaction is a 1,2-diacyl-sn-glycero-3-phospho-L-serine + H(+) = a 1,2-diacyl-sn-glycero-3-phosphoethanolamine + CO2. The protein operates within phospholipid metabolism; phosphatidylethanolamine biosynthesis; phosphatidylethanolamine from CDP-diacylglycerol: step 2/2. Catalyzes the formation of phosphatidylethanolamine (PtdEtn) from phosphatidylserine (PtdSer). This chain is Phosphatidylserine decarboxylase proenzyme, found in Geobacter metallireducens (strain ATCC 53774 / DSM 7210 / GS-15).